A 557-amino-acid chain; its full sequence is MTKYVFVTGGVVSSLGKGIAAASLAAILESRGLKVTLLKLDPYINVDPGTMSPFQHGEVFVTEDGAETDLDLGHYERFISTKMRKANNFTTGQIYESVIRKERRGDYLGKTVQVIPHITNEIQAFIERGAASATCGEPDVAIVEVGGTVGDIESLPFLEAARQMSLRMGRNSACFVHLTLVPWVATAGELKTKPTQHSVQKLREIGISPHVLLCRADRRIPDDERAKISMFSNVPEDAVISVWDADSIYKIPQMLHDQGLDAIICEELKLTPHAADLSMWSDLVEKLEHPKHEVTIGMVGKYVDLTESYKSLIEALRHASMHTSTKVNIEYIDSEEVETQGVESLKHLDAVLVPGGFGRRGTEGKIAAIRYAREAKVPYLGICLGMQLAVIEFARDVVGLKDANSTEFDQETPNRVVALITEWYDREGRVEKRTEESDLGGTMRLGSQRCPIKPGTMAEEIYGKDVNERHRHRYEVNNRFVPQLEAGGLIISARTPSEDLPEMMELPRSMHPWFVGVQFHPEFTSTPRDGHPLFKSFVEAALAHHEAQAPVAVGEKA.

Positions methionine 1 to leucine 270 are amidoligase domain. Position 13 (serine 13) interacts with CTP. Serine 13 contacts UTP. ATP is bound by residues serine 14 to isoleucine 19 and aspartate 71. The Mg(2+) site is built by aspartate 71 and glutamate 144. Residues aspartate 151–glutamate 153, lysine 191–glutamine 196, and lysine 227 contribute to the CTP site. UTP-binding positions include lysine 191–glutamine 196 and lysine 227. One can recognise a Glutamine amidotransferase type-1 domain in the interval threonine 295–alanine 547. L-glutamine is bound at residue glycine 356. Catalysis depends on cysteine 383, which acts as the Nucleophile; for glutamine hydrolysis. Residues leucine 384–glutamine 387, glutamate 407, and arginine 473 each bind L-glutamine. Active-site residues include histidine 520 and glutamate 522.

It belongs to the CTP synthase family. In terms of assembly, homotetramer.

The catalysed reaction is UTP + L-glutamine + ATP + H2O = CTP + L-glutamate + ADP + phosphate + 2 H(+). It carries out the reaction L-glutamine + H2O = L-glutamate + NH4(+). The enzyme catalyses UTP + NH4(+) + ATP = CTP + ADP + phosphate + 2 H(+). It participates in pyrimidine metabolism; CTP biosynthesis via de novo pathway; CTP from UDP: step 2/2. Allosterically activated by GTP, when glutamine is the substrate; GTP has no effect on the reaction when ammonia is the substrate. The allosteric effector GTP functions by stabilizing the protein conformation that binds the tetrahedral intermediate(s) formed during glutamine hydrolysis. Inhibited by the product CTP, via allosteric rather than competitive inhibition. Its function is as follows. Catalyzes the ATP-dependent amination of UTP to CTP with either L-glutamine or ammonia as the source of nitrogen. Regulates intracellular CTP levels through interactions with the four ribonucleotide triphosphates. The sequence is that of CTP synthase from Paraburkholderia phytofirmans (strain DSM 17436 / LMG 22146 / PsJN) (Burkholderia phytofirmans).